We begin with the raw amino-acid sequence, 162 residues long: CASP-like protein 1C1 (162 aa).

Over 1–7 (MAKLHRL) the chain is Cytoplasmic. The helical transmembrane segment at 8 to 28 (ISAVLRLAAAGAAAAAAIIMV) threads the bilayer. At 29-50 (TSHETTSFFGIEMEAKYSYTPS) the chain is on the extracellular side. The chain crosses the membrane as a helical span at residues 51–71 (FVFFVVAFAVAFAYSLLALLA). Residues 72 to 79 (RPGSTASR) are Cytoplasmic-facing. Residues 80 to 100 (LLLLSDVMVGMLLTGAVAATG) form a helical membrane-spanning segment. Residues 101–128 (AISQVGKSGNEHAGWLPICAQVQAYCSH) lie on the Extracellular side of the membrane. A helical transmembrane segment spans residues 129–149 (VMGALIAGFVSLLLYFLIIMY). The Cytoplasmic segment spans residues 150–162 (SLHAVAEPLCSCH).

The protein belongs to the Casparian strip membrane proteins (CASP) family. As to quaternary structure, homodimer and heterodimers.

It localises to the cell membrane. In Sorghum bicolor (Sorghum), this protein is CASP-like protein 1C1.